A 292-amino-acid polypeptide reads, in one-letter code: Nucleotide-binding protein Ldb0621 (292 aa).

14 to 21 serves as a coordination point for ATP; that stretch reads GMSGAGKT. 64–67 is a GTP binding site; sequence DLRV.

Belongs to the RapZ-like family.

Displays ATPase and GTPase activities. In Lactobacillus delbrueckii subsp. bulgaricus (strain ATCC 11842 / DSM 20081 / BCRC 10696 / JCM 1002 / NBRC 13953 / NCIMB 11778 / NCTC 12712 / WDCM 00102 / Lb 14), this protein is Nucleotide-binding protein Ldb0621.